A 267-amino-acid polypeptide reads, in one-letter code: Ribosomal RNA small subunit methyltransferase NEP1 (267 aa).

Positions 1-46 (MSELKNGTTEPKKNETTQSDSKSKSTSTNKSSVPPASLVPVQPTAL) are disordered. A compositionally biased stretch (low complexity) spans 16-32 (TTQSDSKSKSTSTNKSS). Residues leucine 195, glycine 222, 227–229 (GKD), and 242–247 (LSDYPL) contribute to the S-adenosyl-L-methionine site.

Belongs to the class IV-like SAM-binding methyltransferase superfamily. RNA methyltransferase NEP1 family. In terms of assembly, homodimer.

It localises to the nucleus. The protein resides in the nucleolus. It catalyses the reaction a pseudouridine in rRNA + S-adenosyl-L-methionine = an N(1)-methylpseudouridine in rRNA + S-adenosyl-L-homocysteine + H(+). Its function is as follows. S-adenosyl-L-methionine-dependent pseudouridine N(1)-methyltransferase that methylates the pseudouridine corresponding to position 1189 (Psi1189) in S.cerevisiae 18S rRNA. Involved the biosynthesis of the hypermodified N1-methyl-N3-(3-amino-3-carboxypropyl) pseudouridine (m1acp3-Psi) conserved in eukaryotic 18S rRNA. Also has an essential role in 40S ribosomal subunit biogenesis independent on its methyltransferase activity, facilitating the incorporation of ribosomal protein S19 during the formation of pre-ribosomes. The chain is Ribosomal RNA small subunit methyltransferase NEP1 from Candida albicans (Yeast).